The primary structure comprises 275 residues: Large ribosomal subunit protein uL2 (275 aa).

The interval 212–259 (RWKGIRPTNRGVTMNPVDHPHGGGEGKTSGGRHPVTPWGQPTRGYKTR) is disordered.

Belongs to the universal ribosomal protein uL2 family. In terms of assembly, part of the 50S ribosomal subunit. Forms a bridge to the 30S subunit in the 70S ribosome.

In terms of biological role, one of the primary rRNA binding proteins. Required for association of the 30S and 50S subunits to form the 70S ribosome, for tRNA binding and peptide bond formation. It has been suggested to have peptidyltransferase activity; this is somewhat controversial. Makes several contacts with the 16S rRNA in the 70S ribosome. The polypeptide is Large ribosomal subunit protein uL2 (Acidobacterium capsulatum (strain ATCC 51196 / DSM 11244 / BCRC 80197 / JCM 7670 / NBRC 15755 / NCIMB 13165 / 161)).